Reading from the N-terminus, the 67-residue chain is Conotoxin TsMMSK-B022 (67 aa).

The N-terminal stretch at 1–22 (MMSKLGVLLTICLLLFPLTAVS) is a signal peptide. A propeptide spanning residues 23–50 (LDGDQPADLPELRAQDFAPERSPWFDPV) is cleaved from the precursor. Cystine bridges form between cysteine 53–cysteine 65, cysteine 54–cysteine 61, and cysteine 58–cysteine 64. A 4-hydroxyproline modification is found at proline 63.

Belongs to the conotoxin M superfamily. As to expression, expressed by the venom duct.

Its subcellular location is the secreted. The sequence is that of Conotoxin TsMMSK-B022 from Conus tessulatus (Tessellate cone).